Consider the following 138-residue polypeptide: Acidic phospholipase A2 Tbo-E6 (138 aa).

The signal sequence occupies residues 1-16 (MRTLWILAVLLLGVKG). 7 disulfide bridges follow: Cys42-Cys131, Cys44-Cys60, Cys59-Cys111, Cys65-Cys138, Cys66-Cys104, Cys73-Cys97, and Cys91-Cys102. Ca(2+) is bound by residues Tyr43, Gly45, and Gly47. His63 is an active-site residue. Asp64 provides a ligand contact to Ca(2+). Asp105 is a catalytic residue.

Monomer. The cofactor is Ca(2+). In terms of tissue distribution, expressed by the venom gland.

It localises to the secreted. It catalyses the reaction a 1,2-diacyl-sn-glycero-3-phosphocholine + H2O = a 1-acyl-sn-glycero-3-phosphocholine + a fatty acid + H(+). Functionally, snake venom phospholipase A2 (PLA2) that impairs hemostasis. It weakly inhibits ADP-induced platelet aggregation when tested on platelet rich plasma from human and rabbit blood (15-25% of inhibition at 5-10 ug of enzyme), and dose-dependently inhibits blood coagulation, possibly by inhibiting thrombin activation. Exhibits high hydrolytic activities toward L-dipalmitoyl phosphatidylcholine. PLA2 catalyzes the calcium-dependent hydrolysis of the 2-acyl groups in 3-sn-phosphoglycerides. The sequence is that of Acidic phospholipase A2 Tbo-E6 from Craspedocephalus borneensis (Borneo pit viper).